Reading from the N-terminus, the 371-residue chain is Vasopressin V2 receptor (371 aa).

Over 1–38 (MLLVSTVSAVPGLFSPPSSPSNSSQEELLDDRDPLLVR) the chain is Extracellular. N-linked (GlcNAc...) asparagine glycosylation occurs at asparagine 22. A helical transmembrane segment spans residues 39 to 63 (AELALLSTIFVAVALSNGLVLGALI). Residues 64–77 (RRGRRGRWAPMHVF) lie on the Cytoplasmic side of the membrane. Residues 78–98 (ISHLCLADLAVALFQVLPQLA) traverse the membrane as a helical segment. Residues 99 to 113 (WDATDRFHGPDALCR) are Extracellular-facing. A helical membrane pass occupies residues 114 to 135 (AVKYLQMVGMYASSYMILAMTL). The Cytoplasmic segment spans residues 136-159 (DRHRAICRPMLAYRHGGGARWNRP). Residues 160 to 180 (VLVAWAFSLLLSLPQLFIFAQ) form a helical membrane-spanning segment. Residues 181 to 200 (RDVGNGSGVFDCWARFAEPW) are Extracellular-facing. An N-linked (GlcNAc...) asparagine glycan is attached at asparagine 185. Residues 201–220 (GLRAYVTWIALMVFVAPALG) traverse the membrane as a helical segment. Residues 221-271 (IAACQVLIFREIHASLVPGPSERAGRRRRGRRTGSPSEGAHVSAAMAKTVR) are Cytoplasmic-facing. Residues 240–260 (PSERAGRRRRGRRTGSPSEGA) form a disordered region. Residues 272–293 (MTLVIVIVYVLCWAPFFLVQLW) form a helical membrane-spanning segment. Residues 294 to 308 (AAWDPEAPLERPPFV) lie on the Extracellular side of the membrane. The chain crosses the membrane as a helical span at residues 309–328 (LLMLLASLNSCTNPWIYASF). Residues 329–371 (SSSVSSELRSLLCCAQRHTTHSLGPQDESCATASSSLMKDTPS) are Cytoplasmic-facing. 2 S-palmitoyl cysteine lipidation sites follow: cysteine 341 and cysteine 342. A disordered region spans residues 349-371 (HSLGPQDESCATASSSLMKDTPS). Positions 357 to 371 (SCATASSSLMKDTPS) are enriched in polar residues.

The protein belongs to the G-protein coupled receptor 1 family. Vasopressin/oxytocin receptor subfamily. As to quaternary structure, interacts with ARRDC4. Identified in a complex containing at least ARRDC4, V2R and HGS. Interacts with TMEM147. As to expression, kidney.

It is found in the cell membrane. In terms of biological role, receptor for arginine vasopressin. The activity of this receptor is mediated by G proteins which activate adenylate cyclase. Involved in renal water reabsorption. This Rattus norvegicus (Rat) protein is Vasopressin V2 receptor (Avpr2).